The sequence spans 260 residues: Pyridoxine 5'-phosphate synthase (260 aa).

Asn6 contributes to the 3-amino-2-oxopropyl phosphate binding site. 8 to 9 (DH) is a 1-deoxy-D-xylulose 5-phosphate binding site. 3-amino-2-oxopropyl phosphate is bound at residue Arg17. His42 (proton acceptor) is an active-site residue. Residues Arg44 and His49 each contribute to the 1-deoxy-D-xylulose 5-phosphate site. Glu69 serves as the catalytic Proton acceptor. Thr99 is a binding site for 1-deoxy-D-xylulose 5-phosphate. His213 acts as the Proton donor in catalysis. 3-amino-2-oxopropyl phosphate-binding positions include Gly214 and 235 to 236 (GQ).

The protein belongs to the PNP synthase family. Homooctamer; tetramer of dimers.

The protein localises to the cytoplasm. The catalysed reaction is 3-amino-2-oxopropyl phosphate + 1-deoxy-D-xylulose 5-phosphate = pyridoxine 5'-phosphate + phosphate + 2 H2O + H(+). It functions in the pathway cofactor biosynthesis; pyridoxine 5'-phosphate biosynthesis; pyridoxine 5'-phosphate from D-erythrose 4-phosphate: step 5/5. Functionally, catalyzes the complicated ring closure reaction between the two acyclic compounds 1-deoxy-D-xylulose-5-phosphate (DXP) and 3-amino-2-oxopropyl phosphate (1-amino-acetone-3-phosphate or AAP) to form pyridoxine 5'-phosphate (PNP) and inorganic phosphate. The chain is Pyridoxine 5'-phosphate synthase from Sulfurimonas denitrificans (strain ATCC 33889 / DSM 1251) (Thiomicrospira denitrificans (strain ATCC 33889 / DSM 1251)).